The primary structure comprises 657 residues: Penicillin-binding protein activator LpoA (657 aa).

An N-terminal signal peptide occupies residues 1–25; it reads MLSSTFVRSKAGLVPVILAALILAA. Residue C26 is the site of N-palmitoyl cysteine attachment. The S-diacylglycerol cysteine moiety is linked to residue C26.

Belongs to the LpoA family. As to quaternary structure, interacts with PBP1a.

The protein resides in the cell outer membrane. Functionally, regulator of peptidoglycan synthesis that is essential for the function of penicillin-binding protein 1A (PBP1a). This Yersinia pseudotuberculosis serotype O:1b (strain IP 31758) protein is Penicillin-binding protein activator LpoA.